A 126-amino-acid chain; its full sequence is RutC family protein PH0854 (126 aa).

Belongs to the RutC family.

The sequence is that of RutC family protein PH0854 from Pyrococcus horikoshii (strain ATCC 700860 / DSM 12428 / JCM 9974 / NBRC 100139 / OT-3).